A 176-amino-acid polypeptide reads, in one-letter code: MAIREILTVPDPRLKQVSKPVEGGVTDDIRALMDDMLETMYDAPGIGLAAIQIGVPLRVIVMDLAREGEEPAPRYFVNPEILETIEEKKPYEEGCLSVPDIFDQVERSARCRIRYLDYDGKQVDEWAEDLYAVCIQHEMDHLEGTLFIDYLSRLKRDRAIDKVKKAKIRAIREDAN.

Cys95 and His137 together coordinate Fe cation. Glu138 is an active-site residue. Position 141 (His141) interacts with Fe cation.

It belongs to the polypeptide deformylase family. The cofactor is Fe(2+).

It catalyses the reaction N-terminal N-formyl-L-methionyl-[peptide] + H2O = N-terminal L-methionyl-[peptide] + formate. Its function is as follows. Removes the formyl group from the N-terminal Met of newly synthesized proteins. Requires at least a dipeptide for an efficient rate of reaction. N-terminal L-methionine is a prerequisite for activity but the enzyme has broad specificity at other positions. The polypeptide is Peptide deformylase (Hyphomonas neptunium (strain ATCC 15444)).